We begin with the raw amino-acid sequence, 147 residues long: MVHLTGEEKGIVTGLWGKVNVDEVGGEALGRLLVVYPWTQRFFDSFGDLSSAAAVMGNAKVKAHGKKVLDSFSEGLKNLDNLKGTFAKLSELHCDKLHVDPENFRLLGNVLVCVLARNFGKEFTPQVQAAYQKVVVGVATALAHKYH.

Val-2 is subject to N-acetylvaline. A Globin domain is found at 3–147 (HLTGEEKGIV…VATALAHKYH (145 aa)). At Thr-13 the chain carries Phosphothreonine. Residue Ser-45 is modified to Phosphoserine. An N6-acetyllysine modification is found at Lys-60. Heme b is bound at residue His-64. Lys-83 carries the N6-acetyllysine modification. His-93 lines the heme b pocket. An S-nitrosocysteine modification is found at Cys-94. Lys-145 bears the N6-acetyllysine mark.

This sequence belongs to the globin family. As to quaternary structure, heterotetramer of two alpha chains and two beta chains. Red blood cells.

Involved in oxygen transport from the lung to the various peripheral tissues. In Rhinolophus ferrumequinum (Greater horseshoe bat), this protein is Hemoglobin subunit beta (HBB).